Consider the following 161-residue polypeptide: MPSFDVVSEVDKHELTNAVDQANRELDTRFDFKGVEARFELEDGKVINQSAPSDFQIKQMTDILRARLLARGIDIRCLEFGDVETNLAGARQKVTVKQGIEQKQAKQLVAKLKEAKLKVEAQINGDKLRVTGKKRDDLQDAIALLKKADFELPLQFDNFRD.

The protein belongs to the YajQ family.

Nucleotide-binding protein. This is Nucleotide-binding protein XAC3671 from Xanthomonas axonopodis pv. citri (strain 306).